The sequence spans 375 residues: Trichodiene synthase (375 aa).

This sequence belongs to the trichodiene synthase family.

It carries out the reaction (2E,6E)-farnesyl diphosphate = trichodiene + diphosphate. It participates in sesquiterpene biosynthesis; trichothecene biosynthesis. Its function is as follows. TS is a member of the terpene cyclase group of enzymes. It catalyzes the isomerization and cyclization of farnesyl pyro-phosphate to form trichodiene, the first cyclic intermediate in the biosynthetic pathway for trichothecenes. It serves to branch trichothecene biosynthesis from the isoprenoid pathway. This chain is Trichodiene synthase (TRI5), found in Fusarium mesoamericanum.